The chain runs to 256 residues: 5'-nucleotidase SurE (256 aa).

A divalent metal cation is bound by residues D8, D9, S40, and N94.

The protein belongs to the SurE nucleotidase family. It depends on a divalent metal cation as a cofactor.

The protein resides in the cytoplasm. The enzyme catalyses a ribonucleoside 5'-phosphate + H2O = a ribonucleoside + phosphate. Its function is as follows. Nucleotidase that shows phosphatase activity on nucleoside 5'-monophosphates. This Wolbachia pipientis subsp. Culex pipiens (strain wPip) protein is 5'-nucleotidase SurE.